The following is a 123-amino-acid chain: Large ribosomal subunit protein bL17 (123 aa).

The protein belongs to the bacterial ribosomal protein bL17 family. Part of the 50S ribosomal subunit. Contacts protein L32.

This is Large ribosomal subunit protein bL17 from Exiguobacterium sibiricum (strain DSM 17290 / CCUG 55495 / CIP 109462 / JCM 13490 / 255-15).